The chain runs to 209 residues: Imidazole glycerol phosphate synthase subunit HisH (209 aa).

Residues 1 to 205 (MIAIIDYGMG…KGVVESWKSS (205 aa)) form the Glutamine amidotransferase type-1 domain. Cys-79 serves as the catalytic Nucleophile. Catalysis depends on residues His-180 and Glu-182.

As to quaternary structure, heterodimer of HisH and HisF.

The protein resides in the cytoplasm. The catalysed reaction is 5-[(5-phospho-1-deoxy-D-ribulos-1-ylimino)methylamino]-1-(5-phospho-beta-D-ribosyl)imidazole-4-carboxamide + L-glutamine = D-erythro-1-(imidazol-4-yl)glycerol 3-phosphate + 5-amino-1-(5-phospho-beta-D-ribosyl)imidazole-4-carboxamide + L-glutamate + H(+). It catalyses the reaction L-glutamine + H2O = L-glutamate + NH4(+). It functions in the pathway amino-acid biosynthesis; L-histidine biosynthesis; L-histidine from 5-phospho-alpha-D-ribose 1-diphosphate: step 5/9. IGPS catalyzes the conversion of PRFAR and glutamine to IGP, AICAR and glutamate. The HisH subunit catalyzes the hydrolysis of glutamine to glutamate and ammonia as part of the synthesis of IGP and AICAR. The resulting ammonia molecule is channeled to the active site of HisF. This Bacillus cereus (strain ATCC 10987 / NRS 248) protein is Imidazole glycerol phosphate synthase subunit HisH.